The following is a 155-amino-acid chain: Ribosomal RNA large subunit methyltransferase H (155 aa).

S-adenosyl-L-methionine is bound by residues Leu-72, Gly-103, and 122–127 (LSDLTL).

This sequence belongs to the RNA methyltransferase RlmH family. In terms of assembly, homodimer.

It is found in the cytoplasm. It catalyses the reaction pseudouridine(1915) in 23S rRNA + S-adenosyl-L-methionine = N(3)-methylpseudouridine(1915) in 23S rRNA + S-adenosyl-L-homocysteine + H(+). Functionally, specifically methylates the pseudouridine at position 1915 (m3Psi1915) in 23S rRNA. In Paracidovorax citrulli (strain AAC00-1) (Acidovorax citrulli), this protein is Ribosomal RNA large subunit methyltransferase H.